Reading from the N-terminus, the 545-residue chain is Esterase-5C (545 aa).

The N-terminal stretch at 1–19 (MLAARLIILLSFYWLSASA) is a signal peptide. A disulfide bridge connects residues Cys-84 and Cys-103. N-linked (GlcNAc...) asparagine glycosylation occurs at Asn-113. Ser-207 acts as the Acyl-ester intermediate in catalysis. Cys-259 and Cys-271 form a disulfide bridge. N-linked (GlcNAc...) asparagine glycosylation is present at Asn-421. His-467 serves as the catalytic Charge relay system. Asn-507 is a glycosylation site (N-linked (GlcNAc...) asparagine). Cys-515 and Cys-536 are joined by a disulfide.

Belongs to the type-B carboxylesterase/lipase family.

It is found in the secreted. It catalyses the reaction a carboxylic ester + H2O = an alcohol + a carboxylate + H(+). In Drosophila pseudoobscura pseudoobscura (Fruit fly), this protein is Esterase-5C (Est-5C).